The chain runs to 597 residues: Aspartate--tRNA ligase (597 aa).

Residue Glu-180 participates in L-aspartate binding. Positions 204–207 (QLFK) are aspartate. Arg-226 lines the L-aspartate pocket. ATP-binding positions include 226 to 228 (RDE) and Gln-235. His-454 contacts L-aspartate. Residue Glu-488 participates in ATP binding. Residue Arg-495 participates in L-aspartate binding. 540–543 (GLDR) lines the ATP pocket.

This sequence belongs to the class-II aminoacyl-tRNA synthetase family. Type 1 subfamily. Homodimer.

The protein localises to the cytoplasm. It catalyses the reaction tRNA(Asp) + L-aspartate + ATP = L-aspartyl-tRNA(Asp) + AMP + diphosphate. Catalyzes the attachment of L-aspartate to tRNA(Asp) in a two-step reaction: L-aspartate is first activated by ATP to form Asp-AMP and then transferred to the acceptor end of tRNA(Asp). This is Aspartate--tRNA ligase from Clostridium perfringens (strain ATCC 13124 / DSM 756 / JCM 1290 / NCIMB 6125 / NCTC 8237 / Type A).